A 156-amino-acid polypeptide reads, in one-letter code: ATP synthase subunit b (156 aa).

The helical transmembrane segment at 5-25 (VTLIGQTVAFIIFVWFCMKFV) threads the bilayer.

It belongs to the ATPase B chain family. In terms of assembly, F-type ATPases have 2 components, F(1) - the catalytic core - and F(0) - the membrane proton channel. F(1) has five subunits: alpha(3), beta(3), gamma(1), delta(1), epsilon(1). F(0) has three main subunits: a(1), b(2) and c(10-14). The alpha and beta chains form an alternating ring which encloses part of the gamma chain. F(1) is attached to F(0) by a central stalk formed by the gamma and epsilon chains, while a peripheral stalk is formed by the delta and b chains.

The protein resides in the cell inner membrane. Its function is as follows. F(1)F(0) ATP synthase produces ATP from ADP in the presence of a proton or sodium gradient. F-type ATPases consist of two structural domains, F(1) containing the extramembraneous catalytic core and F(0) containing the membrane proton channel, linked together by a central stalk and a peripheral stalk. During catalysis, ATP synthesis in the catalytic domain of F(1) is coupled via a rotary mechanism of the central stalk subunits to proton translocation. Component of the F(0) channel, it forms part of the peripheral stalk, linking F(1) to F(0). In Shewanella loihica (strain ATCC BAA-1088 / PV-4), this protein is ATP synthase subunit b.